We begin with the raw amino-acid sequence, 516 residues long: Glycosyltransferase-like protein gnt15 (516 aa).

The Cytoplasmic portion of the chain corresponds to 1–24 (MSNFYNNNPRRNTFRLTERIKKKP). The helical; Signal-anchor for type II membrane protein transmembrane segment at 25–45 (YQTLIVFILIFLFLYVFGPFG) threads the bilayer. Over 46 to 516 (EKKSNNNNNN…NDNCLTREHW (471 aa)) the chain is Extracellular. An N-linked (GlcNAc...) asparagine glycan is attached at Asn152. The interval 199–250 (DTSNNNNNNNNNNNNNNNNNNNNNNNNNNNNNNNENNDNDNGNNNNNNDNEK) is disordered. The span at 202-246 (NNNNNNNNNNNNNNNNNNNNNNNNNNNNNNNENNDNDNGNNNNNN) shows a compositional bias: low complexity. N-linked (GlcNAc...) asparagine glycans are attached at residues Asn386 and Asn412.

It belongs to the glycosyltransferase 8 family. Highly divergent.

The protein resides in the membrane. Functionally, may have a role in modulating cell adhesion and glycosylation. Essential for development. This is Glycosyltransferase-like protein gnt15 (gnt15) from Dictyostelium discoideum (Social amoeba).